The chain runs to 182 residues: Ribulose bisphosphate carboxylase small subunit, chloroplastic 1 (182 aa).

A chloroplast-targeting transit peptide spans 1–42 (MASIMMNKSVVLSKECAKPLATPKVTLNKRGFATTIATKNRE).

This sequence belongs to the RuBisCO small chain family. Heterohexadecamer of 8 large and 8 small subunits.

The protein resides in the plastid. It is found in the chloroplast. RuBisCO catalyzes two reactions: the carboxylation of D-ribulose 1,5-bisphosphate, the primary event in carbon dioxide fixation, as well as the oxidative fragmentation of the pentose substrate. Both reactions occur simultaneously and in competition at the same active site. Although the small subunit is not catalytic it is essential for maximal activity. In Acetabularia acetabulum (Mermaid's wine glass), this protein is Ribulose bisphosphate carboxylase small subunit, chloroplastic 1.